Reading from the N-terminus, the 231-residue chain is MGHKSNPIGMRLQINRTWDSRWFAQGGDYGQLLLEDIKIRKFIMKTLPQAAISKVVIERPAKLCRISIYAARPGVIIGKKGADIEKLRKKLDSMTESGVSLNIVEIRKPEIDAQLVAQGIADQLERRVAFRRAMKRAVQSALRLGAQGVRITCGGRLGGAEIARTEWYREGRVPLHTLRANVDYAEAEAHTAYGVCGIKVWIFKGEIMAHDPLAQDRLMVEAQTSGVRPTR.

Residues 39-107 (IRKFIMKTLP…GVSLNIVEIR (69 aa)) enclose the KH type-2 domain.

The protein belongs to the universal ribosomal protein uS3 family. In terms of assembly, part of the 30S ribosomal subunit. Forms a tight complex with proteins S10 and S14.

Its function is as follows. Binds the lower part of the 30S subunit head. Binds mRNA in the 70S ribosome, positioning it for translation. The polypeptide is Small ribosomal subunit protein uS3 (Zymomonas mobilis subsp. mobilis (strain ATCC 31821 / ZM4 / CP4)).